We begin with the raw amino-acid sequence, 76 residues long: Zinc finger protein 706 (76 aa).

The segment covering 1-13 (MARGQQKIQSQQK) has biased composition (low complexity). Disordered stretches follow at residues 1–32 (MARG…QKAA) and 53–76 (TFKQ…DVQA). Composition is skewed to basic and acidic residues over residues 17-31 (KQAE…DQKA) and 53-62 (TFKQHFESKH). The segment at 39-62 (YTCTVCRTQMPDPKTFKQHFESKH) adopts a C2H2-type zinc-finger fold.

It is found in the cytoplasm. Its subcellular location is the nucleus. Transcription repressor involved in the exit of embryonic stem cells (ESCs) from self-renewal. This is Zinc finger protein 706 from Gallus gallus (Chicken).